A 152-amino-acid chain; its full sequence is MVWLGVDLGNARVGLALSDPELTFAHPAGNIHVAGDYFFAIDEVLNVIEDEHVDHVIVGLPLQMDGTEGKSAKKARRWAANLEKRLQAESEDSDSTEYQIPQVSLIDERLTTVSAHRQLFEAHKASNKHRPVVDQQSAVVILQTALDRTREQ.

It belongs to the YqgF nuclease family.

It localises to the cytoplasm. Functionally, could be a nuclease involved in processing of the 5'-end of pre-16S rRNA. This Bifidobacterium longum (strain DJO10A) protein is Putative pre-16S rRNA nuclease.